The sequence spans 194 residues: IMP cyclohydrolase (194 aa).

It belongs to the archaeal IMP cyclohydrolase family.

It carries out the reaction IMP + H2O = 5-formamido-1-(5-phospho-D-ribosyl)imidazole-4-carboxamide. It functions in the pathway purine metabolism; IMP biosynthesis via de novo pathway; IMP from 5-formamido-1-(5-phospho-D-ribosyl)imidazole-4-carboxamide: step 1/1. Its function is as follows. Catalyzes the cyclization of 5-formylamidoimidazole-4-carboxamide ribonucleotide to IMP. The polypeptide is IMP cyclohydrolase (Halobacterium salinarum (strain ATCC 29341 / DSM 671 / R1)).